The sequence spans 353 residues: Chorismate synthase (353 aa).

2 residues coordinate NADP(+): Arg-48 and Arg-54. FMN is bound by residues 125 to 127 (RSS), 238 to 239 (NA), Gly-278, 293 to 297 (KPTSS), and Arg-319.

It belongs to the chorismate synthase family. In terms of assembly, homotetramer. It depends on FMNH2 as a cofactor.

The catalysed reaction is 5-O-(1-carboxyvinyl)-3-phosphoshikimate = chorismate + phosphate. The protein operates within metabolic intermediate biosynthesis; chorismate biosynthesis; chorismate from D-erythrose 4-phosphate and phosphoenolpyruvate: step 7/7. In terms of biological role, catalyzes the anti-1,4-elimination of the C-3 phosphate and the C-6 proR hydrogen from 5-enolpyruvylshikimate-3-phosphate (EPSP) to yield chorismate, which is the branch point compound that serves as the starting substrate for the three terminal pathways of aromatic amino acid biosynthesis. This reaction introduces a second double bond into the aromatic ring system. This chain is Chorismate synthase, found in Buchnera aphidicola subsp. Schizaphis graminum (strain Sg).